The following is a 420-amino-acid chain: Disease resistance protein CHS1 (420 aa).

The region spanning 12–167 is the TIR domain; sequence RELDVFLSFS…QIADDIRLMF (156 aa). Residue E86 is part of the active site. In terms of domain architecture, NB-ARC spans 185–406; it reads MKALYALLAL…KDIKEVWKIM (222 aa).

As to expression, mostly expressed in leaves and flowers (mainly in sepals), and, at a lower intensity, in stems. Present at low levels in roots and seeds.

It is found in the cytoplasm. Its subcellular location is the nucleus. It catalyses the reaction NAD(+) + H2O = ADP-D-ribose + nicotinamide + H(+). Functionally, confers resistance to low temperatures by limiting chloroplast damage and cell death, thus maintaining growth homeostasis. Regulates steryl-esters and sterols accumulation. Limits leaf necrosis associated with virulent bacterial infection (e.g. Pseudomonas syringae pv. tomato DC3000). The sequence is that of Disease resistance protein CHS1 from Arabidopsis thaliana (Mouse-ear cress).